The primary structure comprises 236 residues: ATP synthase subunit 4, mitochondrial (236 aa).

The transit peptide at methionine 1 to tyrosine 29 directs the protein to the mitochondrion.

Belongs to the eukaryotic ATPase subunit B family. In terms of assembly, F-type ATPases have 2 components, CF(1) - the catalytic core - and CF(0) - the membrane proton channel. In yeast, the dimeric form of ATP synthase consists of 17 polypeptides: alpha, beta, gamma, delta, epsilon, 4 (B), 5 (OSCP), 6 (A), 8, 9 (C), d, E (Tim11), f, g, h, i/j and k.

It is found in the mitochondrion. It localises to the mitochondrion inner membrane. Its function is as follows. Mitochondrial membrane ATP synthase (F(1)F(0) ATP synthase or Complex V) produces ATP from ADP in the presence of a proton gradient across the membrane which is generated by electron transport complexes of the respiratory chain. F-type ATPases consist of two structural domains, F(1) - containing the extramembraneous catalytic core, and F(0) - containing the membrane proton channel, linked together by a central stalk and a peripheral stalk. During catalysis, ATP synthesis in the catalytic domain of F(1) is coupled via a rotary mechanism of the central stalk subunits to proton translocation. Part of the complex F(0) domain and the peripheric stalk, which acts as a stator to hold the catalytic alpha(3)beta(3) subcomplex and subunit a/ATP6 static relative to the rotary elements. The protein is ATP synthase subunit 4, mitochondrial (ATP4) of Eremothecium gossypii (strain ATCC 10895 / CBS 109.51 / FGSC 9923 / NRRL Y-1056) (Yeast).